We begin with the raw amino-acid sequence, 160 residues long: 2-C-methyl-D-erythritol 2,4-cyclodiphosphate synthase (160 aa).

2 residues coordinate a divalent metal cation: Asp-11 and His-13. 4-CDP-2-C-methyl-D-erythritol 2-phosphate is bound by residues 11 to 13 and 37 to 38; these read DVH and HS. His-45 contacts a divalent metal cation. Residues 59 to 61, 64 to 68, 103 to 109, 135 to 138, Phe-142, and Arg-145 each bind 4-CDP-2-C-methyl-D-erythritol 2-phosphate; these read DIG, FPDTD, AQAPKMA, and TTTE.

This sequence belongs to the IspF family. In terms of assembly, homotrimer. A divalent metal cation serves as cofactor.

It carries out the reaction 4-CDP-2-C-methyl-D-erythritol 2-phosphate = 2-C-methyl-D-erythritol 2,4-cyclic diphosphate + CMP. It functions in the pathway isoprenoid biosynthesis; isopentenyl diphosphate biosynthesis via DXP pathway; isopentenyl diphosphate from 1-deoxy-D-xylulose 5-phosphate: step 4/6. Functionally, involved in the biosynthesis of isopentenyl diphosphate (IPP) and dimethylallyl diphosphate (DMAPP), two major building blocks of isoprenoid compounds. Catalyzes the conversion of 4-diphosphocytidyl-2-C-methyl-D-erythritol 2-phosphate (CDP-ME2P) to 2-C-methyl-D-erythritol 2,4-cyclodiphosphate (ME-CPP) with a corresponding release of cytidine 5-monophosphate (CMP). This Thioalkalivibrio sulfidiphilus (strain HL-EbGR7) protein is 2-C-methyl-D-erythritol 2,4-cyclodiphosphate synthase.